We begin with the raw amino-acid sequence, 1171 residues long: Pyruvate-flavodoxin oxidoreductase (1171 aa).

4Fe-4S ferredoxin-type domains follow at residues 682–711 and 736–767; these read EVPVWQPEGCTQCNQCAFICPHAAIRPALL and YHLAISPLDCSGCGNCVDICPARGKALKMQSL. The [4Fe-4S] cluster site is built by Cys691, Cys694, Cys697, Cys701, Cys745, Cys748, Cys751, Cys755, Cys811, Cys814, Cys839, and Cys1072.

The protein belongs to the pyruvate:ferredoxin/flavodoxin oxidoreductase family. It depends on [4Fe-4S] cluster as a cofactor.

The enzyme catalyses oxidized [flavodoxin] + pyruvate + CoA + 2 H(+) = reduced [flavodoxin] + acetyl-CoA + CO2. Functionally, oxidoreductase required for the transfer of electrons from pyruvate to flavodoxin, which reduces nitrogenase. This chain is Pyruvate-flavodoxin oxidoreductase (nifJ), found in Klebsiella pneumoniae.